Here is a 414-residue protein sequence, read N- to C-terminus: Serine hydroxymethyltransferase (414 aa).

Residues Leu-121 and Gly-125–Leu-127 each bind (6S)-5,6,7,8-tetrahydrofolate. Lys-229 bears the N6-(pyridoxal phosphate)lysine mark.

The protein belongs to the SHMT family. In terms of assembly, homodimer. The cofactor is pyridoxal 5'-phosphate.

The protein localises to the cytoplasm. The catalysed reaction is (6R)-5,10-methylene-5,6,7,8-tetrahydrofolate + glycine + H2O = (6S)-5,6,7,8-tetrahydrofolate + L-serine. The protein operates within one-carbon metabolism; tetrahydrofolate interconversion. Its pathway is amino-acid biosynthesis; glycine biosynthesis; glycine from L-serine: step 1/1. Catalyzes the reversible interconversion of serine and glycine with tetrahydrofolate (THF) serving as the one-carbon carrier. This reaction serves as the major source of one-carbon groups required for the biosynthesis of purines, thymidylate, methionine, and other important biomolecules. Also exhibits THF-independent aldolase activity toward beta-hydroxyamino acids, producing glycine and aldehydes, via a retro-aldol mechanism. The sequence is that of Serine hydroxymethyltransferase from Janthinobacterium sp. (strain Marseille) (Minibacterium massiliensis).